Consider the following 177-residue polypeptide: DELTA-stichotoxin-Hcr4b (177 aa).

The plays an important role in the hemolytic activity stretch occupies residues 3–12 (ALAGTITLGA). The interval 11–30 (GASLGFQILDKVLGELGKVS) is N-terminal region. Ser54, Val87, Ser105, Pro107, Tyr133, Tyr137, and Tyr138 together coordinate phosphocholine. Residues 105-120 (SVPFDYNLYSNWWDVK) form a trp-rich region, which is important for the binding to lipid membrane region.

This sequence belongs to the actinoporin family. Sea anemone subfamily. Octamer or nonamer in membranes. Monomer in the soluble state.

The protein resides in the secreted. Its subcellular location is the nematocyst. It is found in the target cell membrane. Pore-forming protein that forms cations-selective hydrophilic pores of around 1 nm and causes cardiac stimulation and cytolysis. Pore formation is a multi-step process that involves specific recognition of membrane sphingomyelin (but neither cholesterol nor phosphatidylcholine) using aromatic rich region and adjacent phosphocholine (POC) binding site, firm binding to the membrane (mainly driven by hydrophobic interactions) accompanied by the transfer of the N-terminal region to the lipid-water interface and finally pore formation after oligomerization of monomers. Cytolytic effects include red blood cells hemolysis, platelet aggregation and lysis, cytotoxic and cytostatic effects on fibroblasts. Lethality in mammals has been ascribed to severe vasospasm of coronary vessels, cardiac arrhythmia, and inotropic effects. Preincubation with exogenous sphingomyeline causes complete loss of hemolytic activity. In Radianthus crispa (Leathery sea anemone), this protein is DELTA-stichotoxin-Hcr4b.